Consider the following 423-residue polypeptide: UPF0229 protein Psyr_4632 (423 aa).

The tract at residues 65-110 (HHGRGGKQTVVHPGNKEFTTGEHIARPQGGGGGKGPGKAGNSGEGM) is disordered. Gly residues predominate over residues 92–107 (QGGGGGKGPGKAGNSG).

Belongs to the UPF0229 family.

The protein is UPF0229 protein Psyr_4632 of Pseudomonas syringae pv. syringae (strain B728a).